A 387-amino-acid chain; its full sequence is MKNIVLIGSTGSIGRQTLEVIGSLPDRFKVVGLGSGKNWRLMAEQIRVFRPSAVAMAGEREIMNLKELLAGSYCPELGWGRTGMESLASMPEADLVVVAVTGFAGIYPTIAAIQAGKDVALANKETLVAAGHLVMKMAERHRAAILPVDSEHSAVWQCLCGRNSGEVEKIILTASGGPFREMCLEKLEKVTVDMALKHPNWNMGSKITIDSATLMNKGLEVIEAKWLFGLNYSQIEVVIHPQSIVHSAVEFLDGSVIAQMGLPDMRLPIQYALTYPERLPGSFPKLKLASLQGLTFEEPDTRRFPCLSLAFEAGLAGGTMPAVLNAANEVAVEFFLKGLLPFLGIPSVVRSVMEKHEMASDPGLEEIIEADRWARNMGVKVIRDLFN.

NADPH contacts are provided by Thr10, Gly11, Ser12, Ile13, Gly36, Lys37, Asn38, and Asn123. A 1-deoxy-D-xylulose 5-phosphate-binding site is contributed by Lys124. Position 125 (Glu125) interacts with NADPH. Residue Asp149 participates in Mn(2+) binding. 1-deoxy-D-xylulose 5-phosphate contacts are provided by Ser150, Glu151, Ser175, and His198. Glu151 is a binding site for Mn(2+). NADPH is bound at residue Gly204. 1-deoxy-D-xylulose 5-phosphate-binding residues include Ser211, Asn216, Lys217, and Glu220. Glu220 serves as a coordination point for Mn(2+).

This sequence belongs to the DXR family. Mg(2+) is required as a cofactor. Mn(2+) serves as cofactor.

The enzyme catalyses 2-C-methyl-D-erythritol 4-phosphate + NADP(+) = 1-deoxy-D-xylulose 5-phosphate + NADPH + H(+). Its pathway is isoprenoid biosynthesis; isopentenyl diphosphate biosynthesis via DXP pathway; isopentenyl diphosphate from 1-deoxy-D-xylulose 5-phosphate: step 1/6. Catalyzes the NADPH-dependent rearrangement and reduction of 1-deoxy-D-xylulose-5-phosphate (DXP) to 2-C-methyl-D-erythritol 4-phosphate (MEP). This is 1-deoxy-D-xylulose 5-phosphate reductoisomerase from Pelotomaculum thermopropionicum (strain DSM 13744 / JCM 10971 / SI).